The following is a 333-amino-acid chain: Secreted mono- and diacylglycerol lipase 1 (333 aa).

A signal peptide spans 1–16 (MMLILSILSIIAFAAA). 2 disulfide bridges follow: cysteine 56/cysteine 268 and cysteine 276/cysteine 298. Serine 176 acts as the Nucleophile in catalysis. Catalysis depends on residues aspartate 230 and histidine 288.

It belongs to the AB hydrolase superfamily. Lipase family. Class 3 subfamily.

The protein resides in the secreted. It catalyses the reaction a monoacylglycerol + H2O = glycerol + a fatty acid + H(+). It carries out the reaction a diacylglycerol + H2O = a monoacylglycerol + a fatty acid + H(+). Its function is as follows. Secreted mono- and diacylglycerol lipase that allows the use of hydrolyzed lipids as carbon source and might play a role in pathogenicity. Shows lipolytic activity towards olive oil and p-nitrophenylpalmitate. The sequence is that of Secreted mono- and diacylglycerol lipase 1 from Fusarium solani (Filamentous fungus).